The chain runs to 254 residues: Ubiquinone biosynthesis O-methyltransferase (254 aa).

Positions 47, 76, 97, and 141 each coordinate S-adenosyl-L-methionine.

It belongs to the methyltransferase superfamily. UbiG/COQ3 family.

The enzyme catalyses a 3-demethylubiquinol + S-adenosyl-L-methionine = a ubiquinol + S-adenosyl-L-homocysteine + H(+). It catalyses the reaction a 3-(all-trans-polyprenyl)benzene-1,2-diol + S-adenosyl-L-methionine = a 2-methoxy-6-(all-trans-polyprenyl)phenol + S-adenosyl-L-homocysteine + H(+). Its pathway is cofactor biosynthesis; ubiquinone biosynthesis. Functionally, O-methyltransferase that catalyzes the 2 O-methylation steps in the ubiquinone biosynthetic pathway. This is Ubiquinone biosynthesis O-methyltransferase from Maricaulis maris (strain MCS10) (Caulobacter maris).